Here is a 100-residue protein sequence, read N- to C-terminus: Nucleoid-associated protein MYPU_0500 (100 aa).

Belongs to the YbaB/EbfC family. Homodimer.

Its subcellular location is the cytoplasm. It localises to the nucleoid. Binds to DNA and alters its conformation. May be involved in regulation of gene expression, nucleoid organization and DNA protection. This chain is Nucleoid-associated protein MYPU_0500, found in Mycoplasmopsis pulmonis (strain UAB CTIP) (Mycoplasma pulmonis).